The chain runs to 45 residues: Large ribosomal subunit protein bL36 (45 aa).

Belongs to the bacterial ribosomal protein bL36 family.

This chain is Large ribosomal subunit protein bL36, found in Aliivibrio salmonicida (strain LFI1238) (Vibrio salmonicida (strain LFI1238)).